The sequence spans 250 residues: Ubiquinone/menaquinone biosynthesis C-methyltransferase UbiE (250 aa).

S-adenosyl-L-methionine contacts are provided by residues T73, D94, 122–123 (NA), and S139.

The protein belongs to the class I-like SAM-binding methyltransferase superfamily. MenG/UbiE family.

It carries out the reaction a 2-demethylmenaquinol + S-adenosyl-L-methionine = a menaquinol + S-adenosyl-L-homocysteine + H(+). It catalyses the reaction a 2-methoxy-6-(all-trans-polyprenyl)benzene-1,4-diol + S-adenosyl-L-methionine = a 5-methoxy-2-methyl-3-(all-trans-polyprenyl)benzene-1,4-diol + S-adenosyl-L-homocysteine + H(+). It participates in quinol/quinone metabolism; menaquinone biosynthesis; menaquinol from 1,4-dihydroxy-2-naphthoate: step 2/2. Its pathway is cofactor biosynthesis; ubiquinone biosynthesis. Methyltransferase required for the conversion of demethylmenaquinol (DMKH2) to menaquinol (MKH2) and the conversion of 2-polyprenyl-6-methoxy-1,4-benzoquinol (DDMQH2) to 2-polyprenyl-3-methyl-6-methoxy-1,4-benzoquinol (DMQH2). The sequence is that of Ubiquinone/menaquinone biosynthesis C-methyltransferase UbiE from Francisella tularensis subsp. novicida (strain U112).